The following is a 304-amino-acid chain: Phospholipase A1 (304 aa).

Residues C6 and C90 are joined by a disulfide bond. N61 is a glycosylation site (N-linked (GlcNAc...) asparagine). S140 serves as the catalytic Nucleophile. D168 functions as the Charge relay system in the catalytic mechanism. 2 disulfides stabilise this stretch: C179/C184 and C222/C231. The active-site Charge relay system is H233. 3 disulfide bridges follow: C248–C272, C249–C297, and C265–C270.

The protein belongs to the AB hydrolase superfamily. Lipase family. In terms of tissue distribution, expressed by the venom gland.

It localises to the secreted. The catalysed reaction is a 1,2-diacyl-sn-glycero-3-phosphocholine + H2O = a 2-acyl-sn-glycero-3-phosphocholine + a fatty acid + H(+). Functionally, catalyzes the hydrolysis of phosphatidylcholine with phospholipase A1 activity. May act as an allergen and induce hemolytic activity. The polypeptide is Phospholipase A1 (Vespa velutina (Asian yellow-legged hornet)).